A 551-amino-acid polypeptide reads, in one-letter code: Non-neuronal cytoplasmic intermediate filament protein A (551 aa).

Position 1 is an N-acetylthreonine (threonine 1). The segment at 1 to 54 (TSKISTTYEEEGRQSKIQPRAFVITRSGPTSRSSSYSARQSYGSRSSITPGVYQ) is disordered. Residues 1-74 (TSKISTTYEE…RGTREKEKRE (74 aa)) form a head region. The span at 25 to 47 (TRSGPTSRSSSYSARQSYGSRSS) shows a compositional bias: low complexity. In terms of domain architecture, IF rod spans 71–423 (EKREMQNLNE…KLLEGEESRV (353 aa)). The coil 1A stretch occupies residues 75 to 106 (MQNLNERLAGYIEKVHFLDAQVKKLEAENXXX). The interval 107–120 (XXXXXXXXXXXXXX) is linker 1. Positions 121–258 (XXXXXXXXXX…XXXXXXXXXX (138 aa)) are coil 1B. The interval 259–275 (XXXXXXXXMDYAEFWKS) is linker 12. The interval 276–423 (ELSKCVRDIQ…KLLEGEESRV (148 aa)) is coil 2. Residues 424 to 551 (GLRSLVEQAI…IADMFSLGVG (128 aa)) form a tail region. The region spanning 454-551 (GSMTVQRSSK…IADMFSLGVG (98 aa)) is the LTD domain.

The protein belongs to the intermediate filament family. In terms of assembly, can form homomers.

The protein localises to the cytoplasm. Its function is as follows. Epithelial intermediate filament protein. This is Non-neuronal cytoplasmic intermediate filament protein A from Helix pomatia (Roman snail).